A 47-amino-acid chain; its full sequence is uncharacterized protein (47 aa).

This is an uncharacterized protein from Escherichia coli.